A 505-amino-acid polypeptide reads, in one-letter code: Ribosomal RNA small subunit methyltransferase F (505 aa).

S-adenosyl-L-methionine contacts are provided by residues 123-129 (ASAPGSK), Glu147, Asp174, and Asp192. The active-site Nucleophile is Cys245. Residues 409–437 (GTNANNNSNTNPNNNANTNPNNNSNTNPR) are disordered. Low complexity predominate over residues 410 to 435 (TNANNNSNTNPNNNANTNPNNNSNTN).

This sequence belongs to the class I-like SAM-binding methyltransferase superfamily. RsmB/NOP family.

The protein resides in the cytoplasm. The enzyme catalyses cytidine(1407) in 16S rRNA + S-adenosyl-L-methionine = 5-methylcytidine(1407) in 16S rRNA + S-adenosyl-L-homocysteine + H(+). Its function is as follows. Specifically methylates the cytosine at position 1407 (m5C1407) of 16S rRNA. This Shewanella denitrificans (strain OS217 / ATCC BAA-1090 / DSM 15013) protein is Ribosomal RNA small subunit methyltransferase F.